Reading from the N-terminus, the 673-residue chain is RAS guanyl-releasing protein 4 (673 aa).

2 stretches are compositionally biased toward basic residues: residues 1-10 and 20-32; these read MNRKDIKRKS and GRGR…RHKT. 2 disordered regions span residues 1 to 34 and 164 to 188; these read MNRK…KTCP and LGDA…PGLG. An N-terminal Ras-GEF domain is found at 49–175; it reads GVLSESSCSE…DASSLLSPGG (127 aa). The segment covering 164 to 173 has biased composition (low complexity); sequence LGDASSLLSP. The Ras-GEF domain maps to 201–432; the sequence is ETEELAQHLT…YELSYAREPR (232 aa). The 36-residue stretch at 466–501 folds into the EF-hand domain; sequence HVEQLVESVFKNYDPEGRGSISLEDFERLSGNFPFA. A Phorbol-ester/DAG-type zinc finger spans residues 540–590; that stretch reads LHAFQEVTFRKPTFCHSCSGFLWGVTKQGYRCRDCGLCCHRHCRDQVRVEC. Residues 592-633 are disordered; sequence KRPETKGDPGPPGAPVPATSLPPANCGSEESLSYTLSPDPES.

Belongs to the RASGRP family. In terms of tissue distribution, expressed by mast cells and their progenitors (at protein level). Expressed by dendritic cells. Expressed in neutrophils.

It is found in the cytoplasm. The protein localises to the cell membrane. Functions as a cation- and diacylglycerol (DAG)-regulated nucleotide exchange factor activating Ras through the exchange of bound GDP for GTP. In neutrophils, participates in a phospholipase C-activating N-formyl peptide-activated GPCR (G protein-coupled receptor) signaling pathway by promoting Ras-mediated activation of PIK3CG/PI3Kgamma to promote neutrophil functional responses. In CD117(+) dendritic cells and mast cells, participates in an lipopolysaccharide (LPS)-activated signaling pathway that stimulates the production of interferon-gamma and other pro-inflammatory cytokines by natural killer (NK) cells. May function in mast cell differentiation. Does not appear to be required for the development of B-cells, DC-cells, T-cells, or NK-cells. Functionally, binds diacylglycerol (DAG). In terms of biological role, unable to bind diacylglycerol (DAG). This is RAS guanyl-releasing protein 4 (Rasgrp4) from Mus musculus (Mouse).